The sequence spans 453 residues: Serine/threonine-protein phosphatase 2A regulatory subunit B'' subunit gamma (453 aa).

EF-hand domains lie at 273–308 (PSALRVYGQYLNLDKDHNGMLSKEELSRYGTATMTN) and 341–376 (KEPAALQYIFKLLDIENKGYLNVFSLNYFFRAIQEL). Residues D286, D288, N290, M292, and E297 each coordinate Ca(2+).

As to quaternary structure, interacts with MCM3AP/GANP. Interacts with PPP5C, and the phosphatase 2A core enzyme composed of the PPP2CA catalytic subunit and the constant regulatory subunit PPP2R1A. Finds in a complex with ABCB1, TFPI2 and PPP2R3C; leading to the dephosphorylation of ABCB1. Ubiquitously expressed in brain and other tissues.

The protein localises to the nucleus. It is found in the cytoplasm. In terms of biological role, may regulate MCM3AP phosphorylation through phosphatase recruitment. May act as a negative regulator of ABCB1 expression and function through the dephosphorylation of ABCB1 by TFPI2/PPP2R3C complex. May play a role in the activation-induced cell death of B-cells. The sequence is that of Serine/threonine-protein phosphatase 2A regulatory subunit B'' subunit gamma (PPP2R3C) from Homo sapiens (Human).